We begin with the raw amino-acid sequence, 95 residues long: Glutamine synthetase and cystathionine beta-lyase binding protein (95 aa).

In terms of assembly, interacts with glutamine synthetase (TTHA1329) and cystathionine beta-lyase (TTHA1620), but proteins do not form a ternary complex.

Functionally, binds to glutamine synthetase and cystathionine beta-lyase. May be utilized for the efficient use of nitrogen in the global nitrogen regulation of T.thermophilus. This is Glutamine synthetase and cystathionine beta-lyase binding protein from Thermus thermophilus (strain ATCC 27634 / DSM 579 / HB8).